A 125-amino-acid chain; its full sequence is Prefoldin subunit beta (125 aa).

It belongs to the prefoldin subunit beta family. As to quaternary structure, heterohexamer of two alpha and four beta subunits.

It is found in the cytoplasm. Functionally, molecular chaperone capable of stabilizing a range of proteins. Seems to fulfill an ATP-independent, HSP70-like function in archaeal de novo protein folding. The polypeptide is Prefoldin subunit beta (Halobacterium salinarum (strain ATCC 29341 / DSM 671 / R1)).